The sequence spans 692 residues: DNA ligase (692 aa).

NAD(+) is bound by residues 34–38, 83–84, and Glu124; these read DAEYD and SL. Lys126 (N6-AMP-lysine intermediate) is an active-site residue. Arg147, Glu193, Lys310, and Lys334 together coordinate NAD(+). Positions 428, 431, 446, and 452 each coordinate Zn(2+). In terms of domain architecture, BRCT spans 612-692; that stretch reads AGVAGVSGKT…ALLALLAGNA (81 aa).

This sequence belongs to the NAD-dependent DNA ligase family. LigA subfamily. The cofactor is Mg(2+). It depends on Mn(2+) as a cofactor.

It catalyses the reaction NAD(+) + (deoxyribonucleotide)n-3'-hydroxyl + 5'-phospho-(deoxyribonucleotide)m = (deoxyribonucleotide)n+m + AMP + beta-nicotinamide D-nucleotide.. Its function is as follows. DNA ligase that catalyzes the formation of phosphodiester linkages between 5'-phosphoryl and 3'-hydroxyl groups in double-stranded DNA using NAD as a coenzyme and as the energy source for the reaction. It is essential for DNA replication and repair of damaged DNA. This is DNA ligase from Laribacter hongkongensis (strain HLHK9).